Reading from the N-terminus, the 338-residue chain is Ketol-acid reductoisomerase (NADP(+)) (338 aa).

The KARI N-terminal Rossmann domain occupies 1-181 (MKVYYDKDAD…GGTRGGVIET (181 aa)). NADP(+) contacts are provided by residues 24-27 (YGSQ), Arg-47, and Ser-52. His-107 is an active-site residue. Gly-133 provides a ligand contact to NADP(+). The KARI C-terminal knotted domain occupies 182–327 (TFKEETETDL…SRLRDMMPWI (146 aa)). Residues Asp-190, Glu-194, Glu-226, and Glu-230 each coordinate Mg(2+). Ser-251 is a binding site for substrate.

It belongs to the ketol-acid reductoisomerase family. The cofactor is Mg(2+).

It catalyses the reaction (2R)-2,3-dihydroxy-3-methylbutanoate + NADP(+) = (2S)-2-acetolactate + NADPH + H(+). It carries out the reaction (2R,3R)-2,3-dihydroxy-3-methylpentanoate + NADP(+) = (S)-2-ethyl-2-hydroxy-3-oxobutanoate + NADPH + H(+). It participates in amino-acid biosynthesis; L-isoleucine biosynthesis; L-isoleucine from 2-oxobutanoate: step 2/4. Its pathway is amino-acid biosynthesis; L-valine biosynthesis; L-valine from pyruvate: step 2/4. In terms of biological role, involved in the biosynthesis of branched-chain amino acids (BCAA). Catalyzes an alkyl-migration followed by a ketol-acid reduction of (S)-2-acetolactate (S2AL) to yield (R)-2,3-dihydroxy-isovalerate. In the isomerase reaction, S2AL is rearranged via a Mg-dependent methyl migration to produce 3-hydroxy-3-methyl-2-ketobutyrate (HMKB). In the reductase reaction, this 2-ketoacid undergoes a metal-dependent reduction by NADPH to yield (R)-2,3-dihydroxy-isovalerate. In Nitrosomonas eutropha (strain DSM 101675 / C91 / Nm57), this protein is Ketol-acid reductoisomerase (NADP(+)).